The following is a 515-amino-acid chain: Portal protein (515 aa).

The protein belongs to the podoviridae head-to-tail connector protein family. Homododecamer.

The protein localises to the virion. In terms of biological role, forms the portal vertex of the capsid. This portal plays critical roles in head assembly, genome packaging, neck/tail attachment, and genome ejection. The portal protein multimerizes as a single ring-shaped homododecamer arranged around a central channel. This Salmonella typhimurium (Bacteriophage SP6) protein is Portal protein.